A 49-amino-acid chain; its full sequence is Fungus-induced-related protein 16 (49 aa).

The chain is Fungus-induced-related protein 16 (fipr-16) from Caenorhabditis elegans.